We begin with the raw amino-acid sequence, 1296 residues long: ABC transporter B family member 21 (1296 aa).

Positions methionine 1–lysine 59 are disordered. A compositionally biased stretch (basic and acidic residues) spans glutamate 9–lysine 59. A helical transmembrane segment spans residues isoleucine 77–methionine 97. Positions methionine 80 to alanine 368 constitute an ABC transmembrane type-1 1 domain. An N-linked (GlcNAc...) asparagine glycan is attached at asparagine 113. The next 5 membrane-spanning stretches (helical) occupy residues phenylalanine 128–isoleucine 148, isoleucine 205–leucine 225, leucine 227–isoleucine 247, glycine 307–tyrosine 327, and glycine 336–leucine 356. Residues isoleucine 403–arginine 639 enclose the ABC transporter 1 domain. Asparagine 409 carries N-linked (GlcNAc...) asparagine glycosylation. Glycine 438–serine 445 contacts ATP. N-linked (GlcNAc...) asparagine glycans are attached at residues asparagine 505, asparagine 519, and asparagine 590. The span at leucine 640–lysine 662 shows a compositional bias: basic and acidic residues. The interval leucine 640–serine 672 is disordered. Phosphoserine is present on residues serine 657 and serine 660. One can recognise an ABC transmembrane type-1 2 domain in the interval leucine 730–lysine 1017. The next 2 membrane-spanning stretches (helical) occupy residues isoleucine 731 to isoleucine 751 and isoleucine 774 to phenylalanine 794. Asparagine 826 carries N-linked (GlcNAc...) asparagine glycosylation. 3 helical membrane passes run valine 865–isoleucine 885, glycine 952–alanine 972, and threonine 986–serine 1006. The 238-residue stretch at isoleucine 1052–glutamine 1289 folds into the ABC transporter 2 domain. Glycine 1087 to serine 1094 is an ATP binding site. N-linked (GlcNAc...) asparagine glycosylation is found at asparagine 1141 and asparagine 1240.

The protein belongs to the ABC transporter superfamily. ABCB family. Multidrug resistance exporter (TC 3.A.1.201) subfamily.

It is found in the membrane. This is ABC transporter B family member 21 (ABCB21) from Arabidopsis thaliana (Mouse-ear cress).